The primary structure comprises 537 residues: Copine-3 (537 aa).

C2 domains follow at residues 1-115 (MAAQ…TRPL) and 124-247 (GKGS…PVEF). Ser-14 is modified (phosphoserine). The Ca(2+) site is built by Asp-22, Asp-28, Asp-81, Asp-83, Asp-93, Asp-154, and Asp-160. Residue Ser-197 is modified to Phosphoserine. Ca(2+)-binding residues include Asp-216, Asp-218, and Asp-224. Ser-243 carries the phosphoserine modification. A VWFA domain is found at 291–513 (NFTVGVDFTG…AQCVLAEIPQ (223 aa)).

It belongs to the copine family. In terms of assembly, monomer. Interacts with ERBB2 (preferentially with the tyrosine phosphorylated form); this interaction occurs at the cell membrane and is increased in a growth factor heregulin-dependent manner. Interacts with SHC1; this interaction may mediate the binding of CPNE3 with ERBB2. Interacts with RACK1. The cofactor is Ca(2+). In terms of processing, phosphorylated on serine and threonine residues. As to expression, expressed in breast and weakly in prostate and ovarian tissues. Expressed in neutrophils (at protein level). Widely expressed. Expressed in the brain. Expressed in neutrophil precursors from the bone marrow and peripheral blood. Expressed in primary breast tumors and ovarian endometrioid adenocarcinoma.

The protein resides in the nucleus. The protein localises to the cytoplasm. It localises to the cell membrane. Its subcellular location is the cell junction. It is found in the focal adhesion. Functionally, calcium-dependent phospholipid-binding protein that plays a role in ERBB2-mediated tumor cell migration in response to growth factor heregulin stimulation. The protein is Copine-3 of Homo sapiens (Human).